Consider the following 110-residue polypeptide: Large ribosomal subunit protein uL24 (110 aa).

This sequence belongs to the universal ribosomal protein uL24 family. Part of the 50S ribosomal subunit.

One of two assembly initiator proteins, it binds directly to the 5'-end of the 23S rRNA, where it nucleates assembly of the 50S subunit. Its function is as follows. One of the proteins that surrounds the polypeptide exit tunnel on the outside of the subunit. In Roseiflexus sp. (strain RS-1), this protein is Large ribosomal subunit protein uL24.